A 355-amino-acid polypeptide reads, in one-letter code: Alanine racemase (355 aa).

The Proton acceptor; specific for D-alanine role is filled by Lys-34. An N6-(pyridoxal phosphate)lysine modification is found at Lys-34. Arg-133 provides a ligand contact to substrate. The Proton acceptor; specific for L-alanine role is filled by Tyr-249. A substrate-binding site is contributed by Met-297.

This sequence belongs to the alanine racemase family. Pyridoxal 5'-phosphate is required as a cofactor.

The catalysed reaction is L-alanine = D-alanine. It functions in the pathway amino-acid biosynthesis; D-alanine biosynthesis; D-alanine from L-alanine: step 1/1. Its function is as follows. Catalyzes the interconversion of L-alanine and D-alanine. May also act on other amino acids. The polypeptide is Alanine racemase (alr) (Rickettsia rickettsii (strain Sheila Smith)).